A 735-amino-acid chain; its full sequence is Photosystem I P700 chlorophyll a apoprotein A2 (735 aa).

Transmembrane regions (helical) follow at residues 46–69 (IFASHFGQLAIIFLWTSGNLFHVA), 135–158 (LYTGALFLLFLSTLSLIGGWLHLQ), 175–199 (LNHHLSGLFGVSSLAWTGHLVHVAI), 274–292 (IAHHHLAIAFIFLIAGHMY), 331–354 (IHFQLGLALASLGVITSLVAQHMY), 370–396 (AALYTHHQYIAGFIMTGAFAHGAIFFI), 418–440 (AIISHLSWASLFLGFHTLGPYVH), and 518–536 (FLVHHAIALGLHTTTLILV). The [4Fe-4S] cluster site is built by cysteine 560 and cysteine 569. 2 helical membrane passes run 576–597 (AFYLAVFWMLNTIGWVTFYWHW) and 644–666 (LSVWAWMFLFGHLVWATGFMFLI). The chlorophyll a site is built by histidine 655, methionine 663, and tyrosine 671. Tryptophan 672 contributes to the phylloquinone binding site. Residues 708–728 (LVGLAHFSVGYIFTYAAFLIA) traverse the membrane as a helical segment.

It belongs to the PsaA/PsaB family. The PsaA/B heterodimer binds the P700 chlorophyll special pair and subsequent electron acceptors. PSI consists of a core antenna complex that captures photons, and an electron transfer chain that converts photonic excitation into a charge separation. The eukaryotic PSI reaction center is composed of at least 11 subunits. Requires P700 is a chlorophyll a/chlorophyll a' dimer, A0 is one or more chlorophyll a, A1 is one or both phylloquinones and FX is a shared 4Fe-4S iron-sulfur center. as cofactor.

It localises to the plastid. It is found in the chloroplast thylakoid membrane. The catalysed reaction is reduced [plastocyanin] + hnu + oxidized [2Fe-2S]-[ferredoxin] = oxidized [plastocyanin] + reduced [2Fe-2S]-[ferredoxin]. Functionally, psaA and PsaB bind P700, the primary electron donor of photosystem I (PSI), as well as the electron acceptors A0, A1 and FX. PSI is a plastocyanin-ferredoxin oxidoreductase, converting photonic excitation into a charge separation, which transfers an electron from the donor P700 chlorophyll pair to the spectroscopically characterized acceptors A0, A1, FX, FA and FB in turn. Oxidized P700 is reduced on the lumenal side of the thylakoid membrane by plastocyanin. This is Photosystem I P700 chlorophyll a apoprotein A2 from Zea mays (Maize).